The following is a 514-amino-acid chain: Maltose/maltodextrin transport system permease protein MalF (514 aa).

The Cytoplasmic portion of the chain corresponds to methionine 1–lysine 16. Residues tryptophan 17 to alanine 36 form a helical membrane-spanning segment. The Periplasmic segment spans residues glutamine 37–glutamate 39. A helical membrane pass occupies residues tyrosine 40–alanine 58. The Cytoplasmic segment spans residues asparagine 59–arginine 66. Residues tyrosine 67–threonine 92 traverse the membrane as a helical segment. The Periplasmic segment spans residues asparagine 93–lysine 275. The chain crosses the membrane as a helical span at residues proline 276–valine 306. One can recognise an ABC transmembrane type-1 domain in the interval phenylalanine 281 to asparagine 505. The Cytoplasmic portion of the chain corresponds to glutamine 307–arginine 318. The helical transmembrane segment at valine 319–phenylalanine 336 threads the bilayer. The Periplasmic portion of the chain corresponds to lysine 337 to arginine 369. Residues threonine 370 to leucine 392 form a helical membrane-spanning segment. Over lysine 393 to proline 425 the chain is Cytoplasmic. Residues leucine 426–proline 452 form a helical membrane-spanning segment. Over aspartate 453 to aspartate 483 the chain is Periplasmic. A helical transmembrane segment spans residues phenylalanine 484–asparagine 505. Residues leucine 506–aspartate 514 are Cytoplasmic-facing.

This sequence belongs to the binding-protein-dependent transport system permease family. MalFG subfamily. The complex is composed of two ATP-binding proteins (MalK), two transmembrane proteins (MalG and MalF) and a solute-binding protein (MalE). Protein stability and stable complex formation require YidC.

The protein localises to the cell inner membrane. Part of the ABC transporter complex MalEFGK involved in maltose/maltodextrin import. Probably responsible for the translocation of the substrate across the membrane. The chain is Maltose/maltodextrin transport system permease protein MalF from Escherichia coli (strain K12).